The sequence spans 142 residues: Large ribosomal subunit protein uL13 (142 aa).

This sequence belongs to the universal ribosomal protein uL13 family. In terms of assembly, part of the 50S ribosomal subunit.

In terms of biological role, this protein is one of the early assembly proteins of the 50S ribosomal subunit, although it is not seen to bind rRNA by itself. It is important during the early stages of 50S assembly. This chain is Large ribosomal subunit protein uL13, found in Actinobacillus succinogenes (strain ATCC 55618 / DSM 22257 / CCUG 43843 / 130Z).